We begin with the raw amino-acid sequence, 240 residues long: UDP-2,3-diacylglucosamine hydrolase (240 aa).

5 residues coordinate Mn(2+): D8, H10, D41, N79, and H114. N79–R80 provides a ligand contact to substrate. The substrate site is built by D122, S160, N164, K167, and H195. H195 and H197 together coordinate Mn(2+).

This sequence belongs to the LpxH family. Requires Mn(2+) as cofactor.

It localises to the cell inner membrane. It carries out the reaction UDP-2-N,3-O-bis[(3R)-3-hydroxytetradecanoyl]-alpha-D-glucosamine + H2O = 2-N,3-O-bis[(3R)-3-hydroxytetradecanoyl]-alpha-D-glucosaminyl 1-phosphate + UMP + 2 H(+). The protein operates within glycolipid biosynthesis; lipid IV(A) biosynthesis; lipid IV(A) from (3R)-3-hydroxytetradecanoyl-[acyl-carrier-protein] and UDP-N-acetyl-alpha-D-glucosamine: step 4/6. Hydrolyzes the pyrophosphate bond of UDP-2,3-diacylglucosamine to yield 2,3-diacylglucosamine 1-phosphate (lipid X) and UMP by catalyzing the attack of water at the alpha-P atom. Involved in the biosynthesis of lipid A, a phosphorylated glycolipid that anchors the lipopolysaccharide to the outer membrane of the cell. The polypeptide is UDP-2,3-diacylglucosamine hydrolase (Escherichia coli O157:H7).